We begin with the raw amino-acid sequence, 266 residues long: Histidinol-phosphatase (266 aa).

Positions 69, 84, 86, and 87 each coordinate Mg(2+). Residue Glu69 participates in substrate binding. Substrate is bound by residues 86–89 (IDGT), Arg190, and Asp218. A Mg(2+)-binding site is contributed by Asp218.

The protein belongs to the inositol monophosphatase superfamily. It depends on Mg(2+) as a cofactor.

It carries out the reaction L-histidinol phosphate + H2O = L-histidinol + phosphate. It functions in the pathway amino-acid biosynthesis; L-histidine biosynthesis; L-histidine from 5-phospho-alpha-D-ribose 1-diphosphate: step 8/9. In terms of biological role, catalyzes the dephosphorylation of histidinol-phosphate to histidinol, the direct precursor of histidine. The polypeptide is Histidinol-phosphatase (Streptomyces coelicolor (strain ATCC BAA-471 / A3(2) / M145)).